We begin with the raw amino-acid sequence, 356 residues long: Guanine nucleotide-binding protein alpha-3 subunit (356 aa).

Residues 1–26 form a disordered region; it reads MGACMSKNDEETEQKKRSQKIDRDLE. The N-myristoyl glycine moiety is linked to residue G2. Residue C4 is the site of S-palmitoyl cysteine attachment. The span at 7-23 shows a compositional bias: basic and acidic residues; it reads KNDEETEQKKRSQKIDR. Residues 34 to 356 form the G-alpha domain; it reads KECKILLLGS…NNALKDSGIL (323 aa). Residues 37 to 50 form a G1 motif region; that stretch reads KILLLGSGESGKST. GTP-binding positions include 42–49, 179–185, 204–208, 273–276, and A328; these read GSGESGKS, LRARTKT, DVGGQ, and NKVD. Mg(2+)-binding residues include S49 and T185. Residues 177-185 form a G2 motif region; that stretch reads DVLRARTKT. Residues 200 to 209 form a G3 motif region; that stretch reads IHMFDVGGQR. The tract at residues 269 to 276 is G4 motif; the sequence is ILFLNKVD. The G5 motif stretch occupies residues 326 to 331; that stretch reads TQATDT.

This sequence belongs to the G-alpha family. G(q) subfamily. In terms of assembly, g proteins are composed of 3 units; alpha, beta and gamma. The alpha chain contains the guanine nucleotide binding site.

In terms of biological role, guanine nucleotide-binding proteins (G proteins) are involved as modulators or transducers in various transmembrane signaling systems. Involved in conidiation. The sequence is that of Guanine nucleotide-binding protein alpha-3 subunit (gna-3) from Neurospora crassa (strain ATCC 24698 / 74-OR23-1A / CBS 708.71 / DSM 1257 / FGSC 987).